The sequence spans 321 residues: Malate dehydrogenase (321 aa).

NAD(+) is bound by residues Gly10–Gly15 and Asp34. Substrate is bound by residues Arg83 and Arg89. Residues Asn96 and Ile119 to Asn121 contribute to the NAD(+) site. 2 residues coordinate substrate: Asn121 and Arg152. Catalysis depends on His176, which acts as the Proton acceptor.

It belongs to the LDH/MDH superfamily. MDH type 3 family.

It catalyses the reaction (S)-malate + NAD(+) = oxaloacetate + NADH + H(+). In terms of biological role, catalyzes the reversible oxidation of malate to oxaloacetate. The polypeptide is Malate dehydrogenase (Bartonella bacilliformis (strain ATCC 35685 / KC583 / Herrer 020/F12,63)).